The primary structure comprises 876 residues: MAMPSYSSLSSHISITTTHTRPHPIFPCYYDTQSIPRFFISSDTGSSASKQRNIYLRLGSRKIIAGVGEGATSLSSHSDKMKTDSFPDPKLAKRDFPPGFWKDDIIDSIMSSNKVAAADEERVETLISEIKSMFRGMGDGETTPSAYDTAWVAKIPALDGSDHPHFPQTLQWILLNQLKDGSWGEEHHFLTYDRLLATLACIITLTVWRTGKTQVQKGIEFFKKHAGMMEDEADHRQPSGFEFVFPAMINEAKSLCLDLPYELPFIKQIIKKREAKLKRIPTDLLYTVPTIFLYYLEGLQEIVEWHKIIKLQSKDGSFLSSPASTAAVFMSTGNTKCLEFLNFVLMKFGNHAPCHYPIDLLERLWAVDTVQRLGIDRYFKEEIKEALDYIYSHWGERGIGWARENPVADIGVTAMGLRILRLNGYNVSSDVLRTFRDENGEFFSFMGQTERGVIDMLNLNRCSHVAFPGETVMEEAKHCTERYLWNALEDVDALDKWGLKKNIRGEVEYALKYPWLRSLPRLEARSYIENYGPNDAWLGKTMYIMPYINNGKYLELAKLDFNNVQSIHQKELRELRRWWKSSGFAELNFTRDRVAEIFFSIASSMFEPELATCRAVYTKSTICTVILDDLYDAHGSVEDIKLFNEAVKRWDLFLLDRMPEHIKICFLGLYNLVNEIAEEGRKRQGRDVLGYIRNLWEIQLETFMKEAEWSEAKYVPSFHEYIETASVSIAGATLVLFGVLFTGEVLTDHILSQIDYRSKFAYLMGLTGRLINDTKTYQAERGEGEVASAIQCYMKDHPEFSEEEALKQIYTLMENALADLKEEFLKAKDVPDKCKRLVFDYARSMQLFYQQGDGFTLAPNMEIKQHVKKILFEPVP.

The transit peptide at 1 to 64 (MAMPSYSSLS…YLRLGSRKII (64 aa)) directs the protein to the chloroplast. Positions 628, 632, 772, 776, and 780 each coordinate Mg(2+). Residues 628-632 (DDLYD) carry the DDXXD motif motif.

Belongs to the terpene synthase family. Tpsd subfamily. Requires Mg(2+) as cofactor.

It is found in the plastid. The protein localises to the chloroplast. The enzyme catalyses (+)-copalyl diphosphate = isopimara-7,15-diene + diphosphate. It participates in terpene metabolism; oleoresin biosynthesis. Its function is as follows. Involved in defensive oleoresin formation in conifers in response to insect attack or other injury. Involved in diterpene (C20) olefins biosynthesis. Monofunctional enzyme lacking the DXDD motif in the class II active site relevant for the cyclization of geranylgeranyl diphosphate (GGPP). Requires (+)-copalyl diphosphate ((+)-CPP) as substrate, but no activity with GGPP or ent-CPP. Isopimaradiene is the major products of the enzyme followed by sandaracopimaradiene. The sequence is that of Monofunctional isopimaradiene synthase, chloroplastic from Pinus banksiana (Jack pine).